The following is a 189-amino-acid chain: Glutathione-dependent formaldehyde-activating enzyme (189 aa).

In terms of domain architecture, CENP-V/GFA spans 20-167 (FAGGTLVCKC…LKELGLEPYD (148 aa)). Positions 27, 29, 48, 50, 53, 95, and 98 each coordinate Zn(2+).

This sequence belongs to the Gfa family. Requires Zn(2+) as cofactor.

The catalysed reaction is S-(hydroxymethyl)glutathione = glutathione + formaldehyde. Its pathway is one-carbon metabolism; formaldehyde degradation; formate from formaldehyde (glutathione route): step 1/3. Catalyzes the condensation of formaldehyde and glutathione to S-hydroxymethylglutathione. The polypeptide is Glutathione-dependent formaldehyde-activating enzyme (Rhodopseudomonas palustris (strain BisB18)).